We begin with the raw amino-acid sequence, 420 residues long: UDP-N-acetylglucosamine 1-carboxyvinyltransferase (420 aa).

A phosphoenolpyruvate-binding site is contributed by 22–23 (KN). UDP-N-acetyl-alpha-D-glucosamine is bound at residue Arg93. Cys117 (proton donor) is an active-site residue. A 2-(S-cysteinyl)pyruvic acid O-phosphothioketal modification is found at Cys117. UDP-N-acetyl-alpha-D-glucosamine is bound by residues Asp307 and Ile329.

The protein belongs to the EPSP synthase family. MurA subfamily.

Its subcellular location is the cytoplasm. It catalyses the reaction phosphoenolpyruvate + UDP-N-acetyl-alpha-D-glucosamine = UDP-N-acetyl-3-O-(1-carboxyvinyl)-alpha-D-glucosamine + phosphate. The protein operates within cell wall biogenesis; peptidoglycan biosynthesis. Cell wall formation. Adds enolpyruvyl to UDP-N-acetylglucosamine. This chain is UDP-N-acetylglucosamine 1-carboxyvinyltransferase, found in Alcanivorax borkumensis (strain ATCC 700651 / DSM 11573 / NCIMB 13689 / SK2).